Consider the following 429-residue polypeptide: MGKNVVVLGTQWGDEGKGKIVDLLTEHAAAVVRYQGGHNAGHTLVIDGEKTVLHLIPSGVLREGVQCLIGNGVVVAPDALLREITKLEEKGVPVRERLRISPSCPLILSFHVALDQAREKARGELKIGTTGRGIGPAYEDKVARRGLRVGDLLNMPRFEDKLRELVDYHNFMLVGYYKEPAIEFEKTLAECKEYAELLKPLMLDVTAELHDLRRAGKDIMFEGAQGSLLDIDHGTYPYVTSSNTTAGGVATGSGVGPMFLDYILGITKAYTTRVGSGPFPTELFDEVGAHLAKQGHEFGATTGRARRCGWFDAVILRRAIDVNSISGICFTKLDVLDGLETINICVGYKDADGNDVAPTDADSYVGLQPVYEEVPGWTESTVGAKTLEELPANARAYIKRVEALIGAPIDIISTGPDRNETIVLRHPFA.

GTP is bound by residues 13-19 (GDEGKGK) and 41-43 (GHT). Residue Asp-14 is the Proton acceptor of the active site. Mg(2+)-binding residues include Asp-14 and Gly-41. IMP is bound by residues 14 to 17 (DEGK), 39 to 42 (NAGH), Thr-130, Arg-144, Gln-225, Thr-240, and Arg-304. His-42 serves as the catalytic Proton donor. Position 300-306 (300-306 (ATTGRAR)) interacts with substrate. Residues Arg-306, 332–334 (KLD), and 413–415 (STG) contribute to the GTP site.

It belongs to the adenylosuccinate synthetase family. Homodimer. Mg(2+) serves as cofactor.

It is found in the cytoplasm. It carries out the reaction IMP + L-aspartate + GTP = N(6)-(1,2-dicarboxyethyl)-AMP + GDP + phosphate + 2 H(+). It functions in the pathway purine metabolism; AMP biosynthesis via de novo pathway; AMP from IMP: step 1/2. Functionally, plays an important role in the de novo pathway of purine nucleotide biosynthesis. Catalyzes the first committed step in the biosynthesis of AMP from IMP. The sequence is that of Adenylosuccinate synthetase from Pseudomonas fluorescens (strain SBW25).